The primary structure comprises 164 residues: MLKINYFNDTDVNMNSWKKFANKILKIAYNYFNFNYDIELSITFVDDLKAQQINQQYRNHSYIADVTSFPVEMTENEIKAIGFRELGDMFINLSEAKRKAIKYNHDLNSEMGFLFVHGFLHLLGYDHENLDDEKIMFDLQDQILKLNNLVYIIKFNEEDYLESN.

The Zn(2+) site is built by His-117, His-121, and His-127.

The protein belongs to the endoribonuclease YbeY family. It depends on Zn(2+) as a cofactor.

The protein resides in the cytoplasm. Functionally, single strand-specific metallo-endoribonuclease involved in late-stage 70S ribosome quality control and in maturation of the 3' terminus of the 16S rRNA. In Mycoplasma capricolum subsp. capricolum (strain California kid / ATCC 27343 / NCTC 10154), this protein is Endoribonuclease YbeY.